The primary structure comprises 466 residues: ATP synthase subunit beta, sodium ion specific (466 aa).

153–160 (GGAGVGKT) lines the ATP pocket.

Belongs to the ATPase alpha/beta chains family. In terms of assembly, F-type ATPases have 2 components, CF(1) - the catalytic core - and CF(0) - the membrane proton channel. CF(1) has five subunits: alpha(3), beta(3), gamma(1), delta(1), epsilon(1). CF(0) has three main subunits: a, b and c.

It is found in the cell membrane. It carries out the reaction 4 Na(+)(in) + ATP + H2O = 4 Na(+)(out) + ADP + phosphate + H(+). Its activity is regulated as follows. Inhibited by nitrate. Produces ATP from ADP in the presence of a sodium ion gradient across the membrane. The beta chain is the catalytic subunit. In Acetobacterium woodii (strain ATCC 29683 / DSM 1030 / JCM 2381 / KCTC 1655 / WB1), this protein is ATP synthase subunit beta, sodium ion specific.